The sequence spans 255 residues: tRNA (guanine-N(7)-)-methyltransferase (255 aa).

The disordered stretch occupies residues 1 to 29; that stretch reads MMHDDPNEAGLPPDDAALPDEAADGADEV. Positions 17–27 are enriched in acidic residues; it reads ALPDEAADGAD. S-adenosyl-L-methionine contacts are provided by E86, E111, D138, and D161. The active site involves D161. Residues K165, D197, and 232 to 235 each bind substrate; that span reads TKFE.

This sequence belongs to the class I-like SAM-binding methyltransferase superfamily. TrmB family.

It carries out the reaction guanosine(46) in tRNA + S-adenosyl-L-methionine = N(7)-methylguanosine(46) in tRNA + S-adenosyl-L-homocysteine. Its pathway is tRNA modification; N(7)-methylguanine-tRNA biosynthesis. In terms of biological role, catalyzes the formation of N(7)-methylguanine at position 46 (m7G46) in tRNA. The sequence is that of tRNA (guanine-N(7)-)-methyltransferase from Burkholderia ambifaria (strain ATCC BAA-244 / DSM 16087 / CCUG 44356 / LMG 19182 / AMMD) (Burkholderia cepacia (strain AMMD)).